The following is a 193-amino-acid chain: tRNA(Phe) 7-((3-amino-3-carboxypropyl)-4-demethylwyosine(37)-N(4))-methyltransferase (193 aa).

The protein belongs to the TYW3 family.

It catalyses the reaction 4-demethyl-7-[(3S)-3-amino-3-carboxypropyl]wyosine(37) in tRNA(Phe) + S-adenosyl-L-methionine = 7-[(3S)-3-amino-3-carboxypropyl]wyosine(37) in tRNA(Phe) + S-adenosyl-L-homocysteine + H(+). Its function is as follows. S-adenosyl-L-methionine-dependent methyltransferase that acts as a component of the wyosine derivatives biosynthesis pathway. Probably methylates N-4 position of wybutosine-86 to produce wybutosine-72. This Methanocaldococcus jannaschii (strain ATCC 43067 / DSM 2661 / JAL-1 / JCM 10045 / NBRC 100440) (Methanococcus jannaschii) protein is tRNA(Phe) 7-((3-amino-3-carboxypropyl)-4-demethylwyosine(37)-N(4))-methyltransferase.